The sequence spans 211 residues: Protein-L-isoaspartate O-methyltransferase (211 aa).

Ser-60 is an active-site residue.

It belongs to the methyltransferase superfamily. L-isoaspartyl/D-aspartyl protein methyltransferase family.

It is found in the cytoplasm. The catalysed reaction is [protein]-L-isoaspartate + S-adenosyl-L-methionine = [protein]-L-isoaspartate alpha-methyl ester + S-adenosyl-L-homocysteine. Catalyzes the methyl esterification of L-isoaspartyl residues in peptides and proteins that result from spontaneous decomposition of normal L-aspartyl and L-asparaginyl residues. It plays a role in the repair and/or degradation of damaged proteins. In Pseudomonas savastanoi pv. phaseolicola (strain 1448A / Race 6) (Pseudomonas syringae pv. phaseolicola (strain 1448A / Race 6)), this protein is Protein-L-isoaspartate O-methyltransferase.